The chain runs to 353 residues: Nicotinate-nucleotide--dimethylbenzimidazole phosphoribosyltransferase (353 aa).

The active-site Proton acceptor is Glu319.

It belongs to the CobT family.

It carries out the reaction 5,6-dimethylbenzimidazole + nicotinate beta-D-ribonucleotide = alpha-ribazole 5'-phosphate + nicotinate + H(+). It functions in the pathway nucleoside biosynthesis; alpha-ribazole biosynthesis; alpha-ribazole from 5,6-dimethylbenzimidazole: step 1/2. Catalyzes the synthesis of alpha-ribazole-5'-phosphate from nicotinate mononucleotide (NAMN) and 5,6-dimethylbenzimidazole (DMB). This chain is Nicotinate-nucleotide--dimethylbenzimidazole phosphoribosyltransferase, found in Chlorobaculum tepidum (strain ATCC 49652 / DSM 12025 / NBRC 103806 / TLS) (Chlorobium tepidum).